The sequence spans 855 residues: DNA mismatch repair protein MutS (855 aa).

Position 617–624 (617–624) interacts with ATP; sequence GPNMGGKS.

The protein belongs to the DNA mismatch repair MutS family.

This protein is involved in the repair of mismatches in DNA. It is possible that it carries out the mismatch recognition step. This protein has a weak ATPase activity. In Baumannia cicadellinicola subsp. Homalodisca coagulata, this protein is DNA mismatch repair protein MutS.